Here is a 262-residue protein sequence, read N- to C-terminus: Vibriobactin-specific 2,3-dihydro-2,3-dihydroxybenzoate dehydrogenase (262 aa).

12–36 provides a ligand contact to NAD(+); sequence LLVGSARGIGFSVLEHLLQAGAQVM. Ser-145 lines the substrate pocket. Residue Tyr-158 is the Proton acceptor of the active site.

It belongs to the short-chain dehydrogenases/reductases (SDR) family.

It catalyses the reaction (2S,3S)-2,3-dihydroxy-2,3-dihydrobenzoate + NAD(+) = 2,3-dihydroxybenzoate + NADH + H(+). The protein operates within siderophore biosynthesis; vibriobactin biosynthesis. In terms of biological role, involved in an early step of the biosynthesis of the catechol siderophore vibriobactin. Vibriobactin is a chelating compound involved in transporting iron from the bacterial environment into the cell cytoplasm. The protein is Vibriobactin-specific 2,3-dihydro-2,3-dihydroxybenzoate dehydrogenase (vibA) of Vibrio cholerae serotype O1 (strain ATCC 39315 / El Tor Inaba N16961).